The primary structure comprises 1184 residues: Probable phospholipid-transporting ATPase 12 (1184 aa).

The Cytoplasmic segment spans residues 1-75 (MATVSGRRRK…TTKYTLATFL (75 aa)). Residues 76-97 (PKSLFEQFRRVANFYFLVVGIL) form a helical membrane-spanning segment. Residues 98 to 101 (SFTP) lie on the Extracellular side of the membrane. The helical transmembrane segment at 102–124 (LAPYTAVSAIVPLTFVILATMFK) threads the bilayer. Over 125–306 (EGVEDWRRKQ…SMIERKMDKI (182 aa)) the chain is Cytoplasmic. The chain crosses the membrane as a helical span at residues 307–328 (IYLMFLMVFSLAFFGSVLFGIW). Residues 329–364 (TRDDFQNGVMERWYLKPDDSSIFFDPKRAPMAAIYH) are Extracellular-facing. Residues 365–382 (FLTALMLNSYFIPISLYV) traverse the membrane as a helical segment. The Cytoplasmic segment spans residues 383-921 (SIEIVKVLQS…HGHWCYRRIS (539 aa)). Asp430 (4-aspartylphosphate intermediate) is an active-site residue. Residues Asp866 and Asp870 each contribute to the Mg(2+) site. Residues 922 to 941 (KMICYFFYKNITFGFTLFLY) form a helical membrane-spanning segment. The Extracellular portion of the chain corresponds to 942-955 (EAYTSFSATPAYND). Residues 956–975 (WYLSLYSVFFTSLPVICLGI) traverse the membrane as a helical segment. At 976–1005 (FDQDVSAPFCLKFPVLYQEGVQNLLFSWRR) the chain is on the cytoplasmic side. A helical membrane pass occupies residues 1006–1028 (ILSWMFHGFCSAIIIFFLCKTSL). The Extracellular portion of the chain corresponds to 1029–1041 (ESQAFNHEGKTAG). Residues 1042–1064 (RDILGGTMYTCVVWVVSLQMVLT) traverse the membrane as a helical segment. The Cytoplasmic portion of the chain corresponds to 1065 to 1070 (ISYFTL). A helical transmembrane segment spans residues 1071-1091 (IQHVVVWGSVVIWYLFLMVYG). The Extracellular portion of the chain corresponds to 1092 to 1108 (SLPIRMSTDAYMVFLEA). The chain crosses the membrane as a helical span at residues 1109–1133 (LAPAPSYWITTLFVVLSTMMPYFIF). Residues 1134–1184 (SAIQMRFFPMSHGTVQLLRYEDQCSNSGNFEMGRQGSVRPTLVMRSHQPES) are Cytoplasmic-facing.

Belongs to the cation transport ATPase (P-type) (TC 3.A.3) family. Type IV subfamily.

It localises to the membrane. It carries out the reaction ATP + H2O + phospholipidSide 1 = ADP + phosphate + phospholipidSide 2.. Functionally, involved in transport of phospholipids. In Arabidopsis thaliana (Mouse-ear cress), this protein is Probable phospholipid-transporting ATPase 12.